The following is a 361-amino-acid chain: Cysteine-rich with EGF-like domain protein 2-A (361 aa).

An N-terminal signal peptide occupies residues 1–24 (MNGSRALHLSAWLLLCLLCSAAVA). Residues 134–176 (DCLACLGGSERPCHGNGFCNGDGTRSGDGLCRCEAEYTGPFCL) form the EGF-like 1 domain. 3 disulfides stabilise this stretch: C138–C152, C146–C164, and C166–C175. Residue N188 is glycosylated (N-linked (GlcNAc...) asparagine). FU repeat units follow at residues 191–238 (YSLC…EESP) and 251–298 (SFLC…SEQV). The EGF-like 2; calcium-binding domain occupies 288 to 329 (DVDECDASEQVCSRENETCLNTAGSYKCTCSEGFEDKEGNCV). Disulfide bonds link C292–C306, C299–C315, and C317–C328. N-linked (GlcNAc...) asparagine glycosylation occurs at N303. The segment at 341–361 (DGEMGTSASDINISNTAHEDL) is disordered. Residues 346–361 (TSASDINISNTAHEDL) show a composition bias toward polar residues. Residue N352 is glycosylated (N-linked (GlcNAc...) asparagine).

Belongs to the CRELD family.

The protein localises to the secreted. Its subcellular location is the endoplasmic reticulum. Functionally, possible role in neuronal acetylcholine receptor transport. This Xenopus laevis (African clawed frog) protein is Cysteine-rich with EGF-like domain protein 2-A (creld2-a).